A 221-amino-acid chain; its full sequence is Translation initiation factor 6 (221 aa).

Belongs to the eIF-6 family.

Functionally, binds to the 50S ribosomal subunit and prevents its association with the 30S ribosomal subunit to form the 70S initiation complex. The protein is Translation initiation factor 6 of Nitrosopumilus maritimus (strain SCM1).